We begin with the raw amino-acid sequence, 702 residues long: Solute carrier organic anion transporter family member 1B3 (702 aa).

Over 1–28 (MDQHQHLNKTAESASSEKKKTRRCNGFK) the chain is Cytoplasmic. A helical membrane pass occupies residues 29 to 48 (MFLAALSFSYIAKALGGIIM). At 49 to 67 (KISITQIERRFDISSSLAG) the chain is on the extracellular side. Residues 68 to 88 (LIDGSFEIGNLLVIVFVSYFG) form a helical membrane-spanning segment. At 89-94 (SKLHRP) the chain is on the cytoplasmic side. The helical transmembrane segment at 95 to 119 (KLIGIGCLLMGTGSILTSLPHFFMG) threads the bilayer. Residues 120–168 (YYRYSKETHINPSENSTSSLSTCLINQTLSFNGTSPEIVEKDCVKESGS) are Extracellular-facing. N134, N145, and N151 each carry an N-linked (GlcNAc...) asparagine glycan. The chain crosses the membrane as a helical span at residues 169-197 (HMWIYVFMGNMLRGIGETPIVPLGISYID). Residues 198–216 (DFAKEGHSSLYLGSLNAIG) lie on the Cytoplasmic side of the membrane. A helical transmembrane segment spans residues 217-237 (MIGPVIGFALGSLFAKMYVDI). The Extracellular segment spans residues 238-255 (GYVDLSTIRITPKDSRWV). The chain crosses the membrane as a helical span at residues 256 to 280 (GAWWLGFLVSGLFSIISSIPFFFLP). The Cytoplasmic segment spans residues 281 to 331 (KNPNKPQKERKISLSLHVLKTNDDRNQTANLTNQGKNVTKNVTGFFQSLKS). A phosphoserine mark is found at S293 and S295. Residues 332–353 (ILTNPLYVIFLLLTLLQVSSFI) form a helical membrane-spanning segment. At 354–373 (GSFTYVFKYMEQQYGQSASH) the chain is on the extracellular side. The chain crosses the membrane as a helical span at residues 374-397 (ANFLLGIITIPTVATGMFLGGFII). Residues 398–401 (KKFK) are Cytoplasmic-facing. The chain crosses the membrane as a helical span at residues 402–425 (LSLVGIAKFSFLTSMISFLFQLLY). Residues 426–537 (FPLICESKSV…NTCTRKFFIY (112 aa)) are Extracellular-facing. The N-linked (GlcNAc...) asparagine glycan is linked to N445. Positions 453–508 (DVPLSYCNSECNCDESQWEPVCGNNGITYLSPCLAGCKSSSGIKKHTVFYNCSCVE) constitute a Kazal-like domain. 3 disulfide bridges follow: C459-C489, C465-C485, and C474-C506. N503 and N516 each carry an N-linked (GlcNAc...) asparagine glycan. The helical transmembrane segment at 538-560 (VAIQVINSLFSATGGTTFILLTV) threads the bilayer. Residues 561–569 (KIVQPELKA) are Cytoplasmic-facing. A helical membrane pass occupies residues 570–595 (LAMGFQSMVIRTLGGILAPIYFGALI). Residues 596 to 629 (DKTCMKWSTNSCGAQGACRIYNSVFFGRVYLGLS) lie on the Extracellular side of the membrane. Residues 630-647 (IALRFPALVLYIVFIFAM) traverse the membrane as a helical segment. The Cytoplasmic segment spans residues 648–695 (KKKFQGKDTKASDNERKVMDEANLEFLNNGEHFVPSAGTDSKTCNLDM). Position 683 is a phosphoserine (S683).

Belongs to the organo anion transporter (TC 2.A.60) family. N-glycosylated. Highly expressed in liver, in particular at the basolateral membrane of hepatocytes near the central vein. Expressed in the placenta. In testis, primarily localized to the basal membrane of Sertoli cells and weakly expressed in Leydig cells and within the tubules.

The protein localises to the basolateral cell membrane. The protein resides in the basal cell membrane. The catalysed reaction is estrone 3-sulfate(out) + hydrogencarbonate(in) = estrone 3-sulfate(in) + hydrogencarbonate(out). The enzyme catalyses 17beta-estradiol 17-O-(beta-D-glucuronate)(out) = 17beta-estradiol 17-O-(beta-D-glucuronate)(in). It catalyses the reaction taurocholate(out) = taurocholate(in). It carries out the reaction estrone 3-sulfate(out) = estrone 3-sulfate(in). The catalysed reaction is dehydroepiandrosterone 3-sulfate(out) = dehydroepiandrosterone 3-sulfate(in). The enzyme catalyses leukotriene C4(out) = leukotriene C4(in). It catalyses the reaction L-thyroxine(out) = L-thyroxine(in). It carries out the reaction prostaglandin E2(out) = prostaglandin E2(in). The catalysed reaction is (4E,15E)-bilirubin IXalpha C8-beta-D-glucuronoside(out) = (4E,15E)-bilirubin IXalpha C8-beta-D-glucuronoside(in). The enzyme catalyses bilirubin IXalpha bis-beta-D-glucuronoside(out) = bilirubin IXalpha bis-beta-D-glucuronoside(in). Its function is as follows. Mediates the Na(+)-independent uptake of organic anions. Shows broad substrate specificity, can transport both organic anions such as bile acid taurocholate (cholyltaurine) and conjugated steroids (17-beta-glucuronosyl estradiol, dehydroepiandrosterone sulfate (DHEAS), and estrone 3-sulfate), as well as eicosanoid leukotriene C4, prostaglandin E2 and L-thyroxine (T4). Hydrogencarbonate/HCO3(-) acts as the probable counteranion that exchanges for organic anions. Shows a pH-sensitive substrate specificity towards sulfated steroids, taurocholate and T4 which may be ascribed to the protonation state of the binding site and leads to a stimulation of substrate transport in an acidic microenvironment. Involved in the clearance of bile acids and organic anions from the liver. Can take up bilirubin glucuronides from plasma into the liver, contributing to the detoxification-enhancing liver-blood shuttling loop. Transports coproporphyrin I and III, by-products of heme synthesis, and may be involved in their hepatic disposition. May contribute to regulate the transport of organic compounds in testes across the blood-testis-barrier. Can transport HMG-CoA reductase inhibitors (also known as statins) such as pitavastatin, a clinically important class of hypolipidemic drugs. May play an important role in plasma and tissue distribution of the structurally diverse chemotherapeutic drugs methotrexate and paclitaxel. May also transport antihypertension agents, such as the angiotensin-converting enzyme (ACE) inhibitor prodrug enalapril, and the highly selective angiotensin II AT1-receptor antagonist valsartan, in the liver. The polypeptide is Solute carrier organic anion transporter family member 1B3 (SLCO1B3) (Homo sapiens (Human)).